A 92-amino-acid polypeptide reads, in one-letter code: DNA/RNA-binding protein Alba (92 aa).

An N6-acetyllysine modification is found at K11.

It belongs to the histone-like Alba family. Post-translationally, acetylated. Acetylation at Lys-11 decreases DNA-binding affinity.

Its subcellular location is the cytoplasm. It is found in the chromosome. Its function is as follows. Binds double-stranded DNA tightly but without sequence specificity. Involved in DNA compaction. This is DNA/RNA-binding protein Alba from Pyrobaculum neutrophilum (strain DSM 2338 / JCM 9278 / NBRC 100436 / V24Sta) (Thermoproteus neutrophilus).